The following is a 160-amino-acid chain: Lipoprotein signal peptidase (160 aa).

2 helical membrane passes run 59–79 and 84–104; these read PEGI…YVWI and SPLF…NLID. Residues D113 and D139 contribute to the active site. Residues 132-152 form a helical membrane-spanning segment; the sequence is WPIFNIADACITIGACLLFFF.

This sequence belongs to the peptidase A8 family.

The protein resides in the cell inner membrane. The catalysed reaction is Release of signal peptides from bacterial membrane prolipoproteins. Hydrolyzes -Xaa-Yaa-Zaa-|-(S,diacylglyceryl)Cys-, in which Xaa is hydrophobic (preferably Leu), and Yaa (Ala or Ser) and Zaa (Gly or Ala) have small, neutral side chains.. The protein operates within protein modification; lipoprotein biosynthesis (signal peptide cleavage). Its function is as follows. This protein specifically catalyzes the removal of signal peptides from prolipoproteins. This chain is Lipoprotein signal peptidase, found in Chlorobaculum parvum (strain DSM 263 / NCIMB 8327) (Chlorobium vibrioforme subsp. thiosulfatophilum).